The primary structure comprises 203 residues: Thymidylate kinase (203 aa).

10 to 17 (GIDGSGKS) contributes to the ATP binding site.

Belongs to the thymidylate kinase family.

It catalyses the reaction dTMP + ATP = dTDP + ADP. Phosphorylation of dTMP to form dTDP in both de novo and salvage pathways of dTTP synthesis. The sequence is that of Thymidylate kinase from Brachyspira hyodysenteriae (strain ATCC 49526 / WA1).